The sequence spans 299 residues: Trans-aconitate 3-methyltransferase (299 aa).

S2 is subject to N-acetylserine.

It belongs to the methyltransferase superfamily. Tam family.

It localises to the cytoplasm. The enzyme catalyses trans-aconitate + S-adenosyl-L-methionine = (E)-2-(methoxycarbonylmethyl)but-2-enedioate + S-adenosyl-L-homocysteine. Its function is as follows. Catalyzes the S-adenosylmethionine monomethyl esterification of trans-aconitate and 3-isopropylmalate at high affinity and of other molecules like cis-aconitate, isocitrate, and citrate at lower velocities and affinities. The function of trans-aconitate methylation appears to be in reducing the toxicity of this spontaneous breakdown product of cis-aconitate. The role of 3-isopropylmalate methylation is unclear but may represent a metabolic branch at 3-isopropylmalate, where some of the material is taken in the pathway leading to leucine and some is taken in a pathway to the 3-isopropylmalate methyl ester, a molecule that provides a signal to switch from vegetative to invasive growth in response to amino acid starvation. This Saccharomyces cerevisiae (strain YJM789) (Baker's yeast) protein is Trans-aconitate 3-methyltransferase (TMT1).